A 261-amino-acid chain; its full sequence is tRNA pseudouridine synthase A (261 aa).

Residue Asp55 is the Nucleophile of the active site. Tyr114 contacts substrate.

This sequence belongs to the tRNA pseudouridine synthase TruA family. In terms of assembly, homodimer.

The catalysed reaction is uridine(38/39/40) in tRNA = pseudouridine(38/39/40) in tRNA. Formation of pseudouridine at positions 38, 39 and 40 in the anticodon stem and loop of transfer RNAs. The polypeptide is tRNA pseudouridine synthase A (Paracoccus denitrificans (strain Pd 1222)).